The sequence spans 98 residues: Large ribosomal subunit protein bL28 (98 aa).

The protein belongs to the bacterial ribosomal protein bL28 family.

In Phenylobacterium zucineum (strain HLK1), this protein is Large ribosomal subunit protein bL28.